Here is a 196-residue protein sequence, read N- to C-terminus: Vacuolar iron transporter homolog 2 (196 aa).

Residues 1–31 (MDQSGSNTNMDIEKESTTFDYSKRSQWLRAA) lie on the Cytoplasmic side of the membrane. Residues 32–52 (VLGANDGLVSTASLMMGVGAV) form a helical membrane-spanning segment. At 53–59 (KHDVKAM) the chain is on the vacuolar side. Residues 60–80 (ILSGFAGMVAGACSMAIGEFV) form a helical membrane-spanning segment. At 81–112 (SVYSQYDIEVAQMERDSVEIEKEKLPSPMQAA) the chain is on the cytoplasmic side. Residues 113–133 (AASALAFSAGAIVPLLAAAFV) traverse the membrane as a helical segment. Over 134–139 (KEYKMR) the chain is Vacuolar. A helical membrane pass occupies residues 140–160 (IISVVVAVTVALMVFGWLGAA). Residues 161–172 (LGKAPAVRSSAR) are Cytoplasmic-facing. A helical transmembrane segment spans residues 173 to 193 (VLFGGWLAMAVTFGLTKLIGL). The Vacuolar portion of the chain corresponds to 194–196 (YGL).

This sequence belongs to the CCC1 family. In terms of tissue distribution, expressed in roots, leaves and inflorescences.

The protein resides in the vacuole membrane. It catalyses the reaction Fe(2+)(in) = Fe(2+)(out). In terms of biological role, vacuolar iron transporter involved in the transfer of iron ions from the cytosol to the vacuole for intracellular iron storage. Involved in regulation of cellular iron homeostasis. Vacuolar iron storage is required for seed embryo and seedling development. This chain is Vacuolar iron transporter homolog 2, found in Arabidopsis thaliana (Mouse-ear cress).